The primary structure comprises 93 residues: Small ribosomal subunit protein uS15 (93 aa).

The protein belongs to the universal ribosomal protein uS15 family. In terms of assembly, part of the 30S ribosomal subunit. Forms a bridge to the 50S subunit in the 70S ribosome, contacting the 23S rRNA.

In terms of biological role, one of the primary rRNA binding proteins, it binds directly to 16S rRNA where it helps nucleate assembly of the platform of the 30S subunit by binding and bridging several RNA helices of the 16S rRNA. Its function is as follows. Forms an intersubunit bridge (bridge B4) with the 23S rRNA of the 50S subunit in the ribosome. The polypeptide is Small ribosomal subunit protein uS15 (Ehrlichia canis (strain Jake)).